The following is a 281-amino-acid chain: Insecticidal crystal toxin protein (281 aa).

Antigenic epitope regions lie at residues 54 to 78 (NYSH…VYTF), 91 to 104 (IYTH…AVKA), 108 to 116 (GTASKVVQG), 131 to 148 (FKIT…FIRI), 160 to 172 (AVIN…VAEL), 189 to 196 (KYKDFQYL), 208 to 216 (QNISLVFNR), 221 to 236 (TNTT…LPIT), and 247 to 256 (KLETVQQIIN).

The protein belongs to the delta endotoxin family.

Functionally, promotes colloidosmotic lysis by binding to the midgut epithelial cells of insects. Active against Mamestra brassicae. In Bacillus thuringiensis subsp. kurstaki, this protein is Insecticidal crystal toxin protein.